Reading from the N-terminus, the 422-residue chain is Elongation factor 1-gamma (422 aa).

The 82-residue stretch at 1 to 82 (MALVLHAGKT…YVARLKADNP (82 aa)) folds into the GST N-terminal domain. In terms of domain architecture, GST C-terminal spans 87 to 215 (SLIDYAHIEQ…VKQTESVPPV (129 aa)). A disordered region spans residues 210 to 269 (ESVPPVPSAKKPSQPKETKSKAKEEPKKEAKKEPAKPKAEAAEEVEEAPKPKPKNPLDLL). The span at 223 to 250 (QPKETKSKAKEEPKKEAKKEPAKPKAEA) shows a compositional bias: basic and acidic residues. In terms of domain architecture, EF-1-gamma C-terminal spans 262–422 (PKNPLDLLPP…EALLDAKCFK (161 aa)).

EF-1 is composed of four subunits: alpha, beta, delta, and gamma.

Its function is as follows. Probably plays a role in anchoring the complex to other cellular components. This is Elongation factor 1-gamma from Prunus avium (Cherry).